Consider the following 316-residue polypeptide: Ribosomal RNA small subunit methyltransferase H (316 aa).

Residues G35–H37, D55, F79, D101, and Q108 contribute to the S-adenosyl-L-methionine site.

It belongs to the methyltransferase superfamily. RsmH family.

It is found in the cytoplasm. The catalysed reaction is cytidine(1402) in 16S rRNA + S-adenosyl-L-methionine = N(4)-methylcytidine(1402) in 16S rRNA + S-adenosyl-L-homocysteine + H(+). Specifically methylates the N4 position of cytidine in position 1402 (C1402) of 16S rRNA. This chain is Ribosomal RNA small subunit methyltransferase H, found in Vibrio vulnificus (strain CMCP6).